A 460-amino-acid chain; its full sequence is Acetyl-coenzyme A carboxylase carboxyl transferase subunit beta, chloroplastic (460 aa).

The CoA carboxyltransferase N-terminal domain occupies L179–N460. Zn(2+) contacts are provided by C183, C186, C202, and C205. The C4-type zinc-finger motif lies at C183–C205.

This sequence belongs to the AccD/PCCB family. Acetyl-CoA carboxylase is a heterohexamer composed of biotin carboxyl carrier protein, biotin carboxylase and 2 subunits each of ACCase subunit alpha and ACCase plastid-coded subunit beta (accD). Requires Zn(2+) as cofactor.

The protein resides in the plastid. It localises to the chloroplast stroma. The catalysed reaction is N(6)-carboxybiotinyl-L-lysyl-[protein] + acetyl-CoA = N(6)-biotinyl-L-lysyl-[protein] + malonyl-CoA. The protein operates within lipid metabolism; malonyl-CoA biosynthesis; malonyl-CoA from acetyl-CoA: step 1/1. Component of the acetyl coenzyme A carboxylase (ACC) complex. Biotin carboxylase (BC) catalyzes the carboxylation of biotin on its carrier protein (BCCP) and then the CO(2) group is transferred by the transcarboxylase to acetyl-CoA to form malonyl-CoA. This is Acetyl-coenzyme A carboxylase carboxyl transferase subunit beta, chloroplastic from Cicer arietinum (Chickpea).